Here is a 273-residue protein sequence, read N- to C-terminus: MSQGYLEFPNIDPVLVSIGPVSVRWYGLMYLVGFMFALWLANRRADKPGSGWTREQVSDLLFAGFLGVVIGGRVGYVIFYNFDLFLADPLYLFKVWTGGMSFHGGLLGVITAMFWYAHKNGRTFFGVADFVAPLVPFGLGMGRMGNFMNSELWGRVTDVPWAIIFPNGGPLPRHPSQLYEMFLEGIVLFFILNWFIKKPRPLGAVSGLFLAGYGTFRFLVEFVREPDAQLGLFGGYISMGQILSSPMIILGILMMVWAYKRGLYQDKVQAETK.

7 consecutive transmembrane segments (helical) span residues 21 to 41 (VSVRWYGLMYLVGFMFALWLA), 60 to 80 (LLFAGFLGVVIGGRVGYVIFY), 95 to 115 (VWTGGMSFHGGLLGVITAMFW), 124 to 144 (FFGVADFVAPLVPFGLGMGRM), 176 to 196 (SQLYEMFLEGIVLFFILNWFI), 203 to 223 (GAVSGLFLAGYGTFRFLVEFV), and 237 to 257 (ISMGQILSSPMIILGILMMVW). Arginine 143 is an a 1,2-diacyl-sn-glycero-3-phospho-(1'-sn-glycerol) binding site.

It belongs to the Lgt family.

It is found in the cell inner membrane. The catalysed reaction is L-cysteinyl-[prolipoprotein] + a 1,2-diacyl-sn-glycero-3-phospho-(1'-sn-glycerol) = an S-1,2-diacyl-sn-glyceryl-L-cysteinyl-[prolipoprotein] + sn-glycerol 1-phosphate + H(+). It participates in protein modification; lipoprotein biosynthesis (diacylglyceryl transfer). In terms of biological role, catalyzes the transfer of the diacylglyceryl group from phosphatidylglycerol to the sulfhydryl group of the N-terminal cysteine of a prolipoprotein, the first step in the formation of mature lipoproteins. This Vibrio campbellii (strain ATCC BAA-1116) protein is Phosphatidylglycerol--prolipoprotein diacylglyceryl transferase.